A 327-amino-acid polypeptide reads, in one-letter code: Thioredoxin reductase (327 aa).

FAD-binding positions include 10-13 (SGPA), 39-40 (IA), Q44, N53, V86, C143, D286, and 293-295 (RQA). Cysteines 140 and 143 form a disulfide.

This sequence belongs to the class-II pyridine nucleotide-disulfide oxidoreductase family. In terms of assembly, homodimer. The cofactor is FAD.

Its subcellular location is the cytoplasm. It catalyses the reaction [thioredoxin]-dithiol + NADP(+) = [thioredoxin]-disulfide + NADPH + H(+). Functionally, component of the thioredoxin-thioredoxin reductase system which may be involved in biosynthesis of penicillins and cephalosporins and may be important in determining the thiol-disulfide redox balance. The protein is Thioredoxin reductase (TRR1) of Pneumocystis jirovecii (Human pneumocystis pneumonia agent).